The chain runs to 309 residues: Carbamate kinase (309 aa).

Belongs to the carbamate kinase family.

It is found in the cytoplasm. It catalyses the reaction hydrogencarbonate + NH4(+) + ATP = carbamoyl phosphate + ADP + H2O + H(+). It functions in the pathway metabolic intermediate metabolism; carbamoyl phosphate degradation; CO(2) and NH(3) from carbamoyl phosphate: step 1/1. This Staphylococcus haemolyticus (strain JCSC1435) protein is Carbamate kinase (arcC).